The chain runs to 413 residues: MAGAAPEGSQFDARQYDSKMTELLNAEGQDFFTSYDEVYHSFDAMGLKENLLRGIYAYGFEKPSAIQQRGIVPFCKGLDVIQQAQSGTGKTATFCSGILQQLDYELLDCQALVLAPTRELAQQIEKVMRALGDYLGVKVHACVGGTSVREDQRILSSGVHVVVGTPGRVFDMLRRQSLRPDHIKMFVLDEADEMLSRGFKDQIYDIFQLLPPKIQVGVFSATMPPEALEITRKFMNKPVRILVKRDELTLEGIKQFYVNVDKEEWKLETLCDLYETLAITQSVIFVNTRRKVDWLTDKMRSRDHTVSATHGDMDQNTRDIIMREFRSGSSRVLITTDLLARGIDVQQVSLVINYDLPTQPENYLHRIGRSGRFGRKGVSINFVTSDDERMLSDIQRFYNVVIEELPANVADLL.

The short motif at 40–68 (HSFDAMGLKENLLRGIYAYGFEKPSAIQQ) is the Q motif element. The region spanning 71 to 241 (IVPFCKGLDV…RKFMNKPVRI (171 aa)) is the Helicase ATP-binding domain. ATP is bound at residue 84–91 (AQSGTGKT). Residues 189–192 (DEAD) carry the DEAD box motif. In terms of domain architecture, Helicase C-terminal spans 252 to 413 (GIKQFYVNVD…ELPANVADLL (162 aa)).

This sequence belongs to the DEAD box helicase family. eIF4A subfamily. In terms of assembly, eIF4F is a multi-subunit complex, the composition of which varies with external and internal environmental conditions. It is composed of at least EIF4A, EIF4E and EIF4G.

It catalyses the reaction ATP + H2O = ADP + phosphate + H(+). ATP-dependent RNA helicase which is a subunit of the eIF4F complex involved in cap recognition and is required for mRNA binding to ribosome. In the current model of translation initiation, eIF4A unwinds RNA secondary structures in the 5'-UTR of mRNAs which is necessary to allow efficient binding of the small ribosomal subunit, and subsequent scanning for the initiator codon. The protein is Eukaryotic initiation factor 4A-9 of Nicotiana tabacum (Common tobacco).